The following is a 526-amino-acid chain: 2-isopropylmalate synthase (526 aa).

One can recognise a Pyruvate carboxyltransferase domain in the interval 5–267 (VIIFDTTLRD…HTGIRHQEIY (263 aa)). Mn(2+)-binding residues include Asp14, His202, His204, and Asn238. Residues 393–526 (RLEYFSVQSG…VPSISTSSTH (134 aa)) are regulatory domain.

It belongs to the alpha-IPM synthase/homocitrate synthase family. LeuA type 1 subfamily. Homodimer. It depends on Mn(2+) as a cofactor.

Its subcellular location is the cytoplasm. The catalysed reaction is 3-methyl-2-oxobutanoate + acetyl-CoA + H2O = (2S)-2-isopropylmalate + CoA + H(+). It participates in amino-acid biosynthesis; L-leucine biosynthesis; L-leucine from 3-methyl-2-oxobutanoate: step 1/4. Functionally, catalyzes the condensation of the acetyl group of acetyl-CoA with 3-methyl-2-oxobutanoate (2-ketoisovalerate) to form 3-carboxy-3-hydroxy-4-methylpentanoate (2-isopropylmalate). This chain is 2-isopropylmalate synthase, found in Edwardsiella ictaluri (strain 93-146).